A 413-amino-acid chain; its full sequence is 3-oxoacyl-[acyl-carrier-protein] synthase 2 (413 aa).

The region spanning 3 to 412 (KRRVVVTGLG…GTNGSLIFKK (410 aa)) is the Ketosynthase family 3 (KS3) domain. Active-site for beta-ketoacyl synthase activity residues include C164, H304, and H341.

The protein belongs to the thiolase-like superfamily. Beta-ketoacyl-ACP synthases family. Homodimer.

It carries out the reaction a fatty acyl-[ACP] + malonyl-[ACP] + H(+) = a 3-oxoacyl-[ACP] + holo-[ACP] + CO2. The enzyme catalyses (9Z)-hexadecenoyl-[ACP] + malonyl-[ACP] + H(+) = 3-oxo-(11Z)-octadecenoyl-[ACP] + holo-[ACP] + CO2. It participates in lipid metabolism; fatty acid biosynthesis. Functionally, involved in the type II fatty acid elongation cycle. Catalyzes the elongation of a wide range of acyl-ACP by the addition of two carbons from malonyl-ACP to an acyl acceptor. Can efficiently catalyze the conversion of palmitoleoyl-ACP (cis-hexadec-9-enoyl-ACP) to cis-vaccenoyl-ACP (cis-octadec-11-enoyl-ACP), an essential step in the thermal regulation of fatty acid composition. The polypeptide is 3-oxoacyl-[acyl-carrier-protein] synthase 2 (fabF) (Escherichia coli O157:H7).